Reading from the N-terminus, the 907-residue chain is MDTSSVGVLLSLPVLLQLAAGGGSPRPGTLLRGCPAHCQCEPDGRMLLRVDCSDLGLSELPSNLSVFTSYLDLSMNNISQLPPSPLHSLRFLEELRLAGNALTYIPKGAFAGLYSLKVLMLQNNHLRQVPTEALQNLRSLQSLRLDANRISSVPPSCFSGLHSLRHLWLDDNALTEIPVQAFRSLSALQAMTLALNKIHHIPDYAFGNLSSLVVLHLHNNRIHSLGKKCFDGLHSLETLDLNYNNLDEFPTAVRTLSNLKELGFHSNNIKSIPEKAFVGNPSLITIHFYDNPIQLVGRSAFQHLPELRTLTLNGASQITEFPDLTGTASLESLTLTGAQISSLPQTVCDQLPNLQVLDLSYNLLEDLPSFSVCQKLQKIDLRHNEIYEIQADTFQQLFSLRSLNLAWNKIAIIDPNAFSTLPSLRKLDLSSNRLSSIPVTGLHGLTHLKLTGNHALQSLISSENFPELKVIEMPYAYQCCAFGVCENVYKISNPWSKGDNSTAEDLHKKDAGVFQVQDERDLEDFLLDFEEDLRALHPVRCSPSPGPFKLCEYLFGSWLIRIGVWTIAVLALTCNALVTSTVFRAAVYISSIKLLIGLIAAVNMLMGVSSAVLAGVDAFTFGSFAQHGAWWEQAVGCQVVGFLSIFASESSVFLLTLAALERGWSVKCSAKFETQTPFPSLRATLALCALLAGTVAAVPLLGGSEYSASPLCLPLPFGEPRATGYMVALVLLNSLCFLVMTVAYTRLYCHLEKGDLESMWDCSMVKHVALLLFTNCILHCPVAFLSFSSLLNLTFISPEVIKFILLVIVPLPACLNPLLYILFNPHFKEDLGSLGKQTHFWTRSKHTSLMSINSDDVEKQSCDSTQALVTFTSASIAYDLPSSSGSPPAYPMTESCHLSSVAFVPCL.

The signal sequence occupies residues 1–21; that stretch reads MDTSSVGVLLSLPVLLQLAAG. Residues 22 to 553 lie on the Extracellular side of the membrane; that stretch reads GGSPRPGTLL…SPGPFKLCEY (532 aa). Residues 33–64 enclose the LRRNT domain; that stretch reads GCPAHCQCEPDGRMLLRVDCSDLGLSELPSNL. Cystine bridges form between Cys34–Cys40 and Cys38–Cys52. LRR repeat units follow at residues 44-64, 65-88, 89-112, 114-136, 137-160, 162-184, 185-208, 209-232, 233-256, 257-279, 281-303, 304-327, 328-350, 351-375, 377-396, 397-420, and 421-444; these read GRML…PSNL, SVFT…PLHS, LRFL…AFAG, YSLK…ALQN, LRSL…CFSG, HSLR…AFRS, LSAL…AFGN, LSSL…CFDG, LHSL…VRTL, SNLK…AFVG, PSLI…AFQH, LPEL…LTGT, ASLE…VCDQ, LPNL…VCQK, QKID…TFQQ, LFSL…AFST, and LPSL…GLHG. N-linked (GlcNAc...) asparagine glycosylation is found at Asn63 and Asn77. Asn208 carries N-linked (GlcNAc...) asparagine glycosylation. Cys348 and Cys373 are disulfide-bonded. Cys479 and Cys541 are joined by a disulfide. Asn500 carries N-linked (GlcNAc...) asparagine glycosylation. A helical transmembrane segment spans residues 554 to 574; it reads LFGSWLIRIGVWTIAVLALTC. An LRR 18 repeat occupies 564 to 585; sequence VWTIAVLALTCNALVTSTVFRA. Residues 575 to 593 are Cytoplasmic-facing; the sequence is NALVTSTVFRAAVYISSIK. Residues 594–614 form a helical membrane-spanning segment; the sequence is LLIGLIAAVNMLMGVSSAVLA. Residues 615–638 lie on the Extracellular side of the membrane; sequence GVDAFTFGSFAQHGAWWEQAVGCQ. Cysteines 637 and 712 form a disulfide. The chain crosses the membrane as a helical span at residues 639–659; that stretch reads VVGFLSIFASESSVFLLTLAA. At 660-682 the chain is on the cytoplasmic side; the sequence is LERGWSVKCSAKFETQTPFPSLR. A helical transmembrane segment spans residues 683 to 703; it reads ATLALCALLAGTVAAVPLLGG. Residues 704–723 are Extracellular-facing; that stretch reads SEYSASPLCLPLPFGEPRAT. Residues 724-744 traverse the membrane as a helical segment; it reads GYMVALVLLNSLCFLVMTVAY. At 745-767 the chain is on the cytoplasmic side; that stretch reads TRLYCHLEKGDLESMWDCSMVKH. The helical transmembrane segment at 768 to 788 threads the bilayer; the sequence is VALLLFTNCILHCPVAFLSFS. The Extracellular segment spans residues 789–802; the sequence is SLLNLTFISPEVIK. N-linked (GlcNAc...) asparagine glycosylation occurs at Asn792. Residues 803-823 form a helical membrane-spanning segment; sequence FILLVIVPLPACLNPLLYILF. At 824–907 the chain is on the cytoplasmic side; the sequence is NPHFKEDLGS…LSSVAFVPCL (84 aa).

It belongs to the G-protein coupled receptor 1 family. In terms of assembly, identified in a complex composed of RNF43, LGR5 and RSPO1. Also interacts with other R-spondin ligands, including RSPO2, RSPO3 and RSPO4.

The protein resides in the cell membrane. It localises to the golgi apparatus. It is found in the trans-Golgi network membrane. In terms of biological role, receptor for R-spondins that potentiates the canonical Wnt signaling pathway and acts as a stem cell marker of the intestinal epithelium and the hair follicle. Upon binding to R-spondins (RSPO1, RSPO2, RSPO3 or RSPO4), associates with phosphorylated LRP6 and frizzled receptors that are activated by extracellular Wnt receptors, triggering the canonical Wnt signaling pathway to increase expression of target genes. In contrast to classical G-protein coupled receptors, does not activate heterotrimeric G-proteins to transduce the signal. Involved in the development and/or maintenance of the adult intestinal stem cells during postembryonic development. The sequence is that of Leucine-rich repeat-containing G-protein coupled receptor 5 (LGR5) from Bos taurus (Bovine).